The following is a 125-amino-acid chain: Calcitonin receptor-stimulating peptide 1 (125 aa).

The signal sequence occupies residues 1–25 (MGFWKFPPFLVLSILVLYQAGMFHA). The propeptide occupies 26–77 (APFRSVFDGRFDPATLDEEESRLLLAAMVNDYEQMRARESEKAQKTEGSRIQ). C81 and C86 form a disulfide bridge.

Belongs to the calcitonin family.

It localises to the secreted. Its function is as follows. Stimulates cAMP production in porcine kidney cell line LLC-PK1 via the calcitonin receptor (CT) but not via the CT-like (CL) receptor. In Capra hircus (Goat), this protein is Calcitonin receptor-stimulating peptide 1 (CRSP1).